Reading from the N-terminus, the 352-residue chain is WAT1-related protein At1g11450 (352 aa).

Helical transmembrane passes span 14–34 (WPPM…NALV), 46–66 (IIGA…AYFL), 83–103 (FISG…GLSY), 107–127 (TVAC…ALIL), 139–159 (AGMI…FLTF), 187–207 (WLLG…WILF), 219–239 (FSST…LSLY), 253–273 (FVIG…TVAA), 283–303 (VFAS…DFLI), and 308–328 (LYLG…VFLW). 2 consecutive EamA domains span residues 27–157 (MGSV…ALFL) and 192–335 (LYLV…KETE).

This sequence belongs to the drug/metabolite transporter (DMT) superfamily. Plant drug/metabolite exporter (P-DME) (TC 2.A.7.4) family.

It localises to the membrane. This chain is WAT1-related protein At1g11450, found in Arabidopsis thaliana (Mouse-ear cress).